A 753-amino-acid chain; its full sequence is Taperin (753 aa).

The tract at residues 141–348 (FDSPAAPRRR…IRPSSKPDME (208 aa)) is disordered. Residues 182–197 (PAPPVLPSQPAPPISP) show a composition bias toward pro residues. Polar residues-rich tracts occupy residues 230–239 (LQKTGSNSFT) and 250–263 (VNRS…TQES). The residue at position 274 (Ser274) is a Phosphoserine. Low complexity predominate over residues 300–322 (TPSATPVGPPAFLAPSPASATPS). A compositionally biased stretch (polar residues) spans 323 to 335 (QRQWVSSATSAND). A compositionally biased stretch (basic and acidic residues) spans 337 to 347 (FEIRPSSKPDM). A phosphoserine mark is found at Ser402, Ser458, and Ser502. Positions 438–488 (GCPRPAISDTDKSVRRQRPASPPPFLPATTEAEPAEGLGVPGLTKNGQEPV) are disordered. 2 disordered regions span residues 544–583 (FTVV…SGPH) and 637–676 (FEYP…DSEK). Residues 559-571 (HLSQTNGQFQQGA) show a composition bias toward polar residues. Acidic residues predominate over residues 648-672 (EEAEEEEEEEEEEEGEDGEEEEVGP).

This sequence belongs to the taperin family. Interacts with GRXCR2; the interaction restricts TPRN to the stereocilum basal region. Interacts with actin ACTB; the interaction may stabilize stereocilia. Interacts with CLIC5. Interacts with PTPRQ. TPRN, CLIC5 and PTPQR form concentric rings at the base of stereocilia and may form a complex. Interacts with phosphatase PPP1CA; the interaction results in inhibition of PPC1A phosphatase activity. Interacts with DNA damage response proteins XRCC6/KU70, XRCC5/KU80, PARP1, TOP1 and TOP2A; these interactions recruit TPRN to sites of DNA damage where it may play a role in DNA repair.

It localises to the cell projection. The protein resides in the stereocilium. Its subcellular location is the microvillus. The protein localises to the nucleus. It is found in the nucleoplasm. It localises to the cytoplasm. Functionally, essential for hearing. Required for maintenance of stereocilia on both inner and outer hair cells. Necessary for the integrity of the stereociliary rootlet. May act as an actin cytoskeleton regulator involved in the regulation of actin dynamics at the pointed end in hair cells. Forms rings at the base of stereocilia and binds actin filaments in the stereocilia which may stabilize the stereocilia. Acts as a strong inhibitor of PPP1CA phosphatase activity. Recruited to sites of DNA damage and may play a role in DNA damage repair. This is Taperin (Tprn) from Rattus norvegicus (Rat).